Here is a 934-residue protein sequence, read N- to C-terminus: MTRSFADRHIGPDAAELSRILEVVGVDSLDALAAAALPASILDDAGAGPLAALPPAVSEHEALAELAALAQSNTVTTSMIGLGYYDTLTPPVLVRNLLENPAWYTAYTPYQPEISQGRLEALLNFQTMVSDLTGMEVANASMLDEATAAAEAMTLLRRAGRSRSNRLLIDADLFPQTRTVLHTRAEPLGIEIVEADLAAAGLPEGGFFGVIVQVPGASGRVVDWTALIAAAHERGALVAAGADLLAMTLIVPPGEQGADVCFGTTQRFGVPMGFGGPHAGYLAVRSAHARQLPGRLVGVSKDADGNPAYRLALQTREQHIRREKATSNICTAQVLLAIVAAMYACYHGADGLRAIARRVHGHAARIAGALGEALVHDTYFDTVLARVPGHAEAVVAKAAACGITLRLVDPDHVAVACDEATTDAHVEAVLDAFGVAPAEPVDAGIATRTSEFLTHPAFTRYRTETAMLRYLRSLSDKDIALDRSMIPLGSCTMKLNATAEMEPITWPGFAKLHPYAPVEHAPGLLKLIGDLESWLAEITGYDAVSLQPNAGSQGEYAGLLAIRRYHLDRGDTHRDTCLIPSSAHGTNAASAAMAGLRVEVVKCRENGDVDLDDLRAKITDHAERLACIMITYPSTHGVYEHEIAELCALVHDAGGQVYVDGANLNALVGLARPGRFGGDVSHLNLHKTFCIPHGGGGPGVGPVAVRAHLAQYLPGDPLESGSHAVSAARYGSASILPITWAYIRMMGAEGLRKATLTAIASANYLARRLDEYFPVLYTGENGMVAHECILDLRELTKRTGVTVDDVAKRLADYGFHAPTMSFPVAGTLMVEPTESENLAELDEFVAAMIAIRAEIDQVGAGVWPAEDNPLRGAPHTAECLVGEWTHPYSREIAVYPRGLGHARAKVWPAVRRIDGAYGDRNLVCSCPPLEAYAE.

At Lys-687 the chain carries N6-(pyridoxal phosphate)lysine.

This sequence belongs to the GcvP family. The glycine cleavage system is composed of four proteins: P, T, L and H. It depends on pyridoxal 5'-phosphate as a cofactor.

It carries out the reaction N(6)-[(R)-lipoyl]-L-lysyl-[glycine-cleavage complex H protein] + glycine + H(+) = N(6)-[(R)-S(8)-aminomethyldihydrolipoyl]-L-lysyl-[glycine-cleavage complex H protein] + CO2. The glycine cleavage system catalyzes the degradation of glycine. The P protein binds the alpha-amino group of glycine through its pyridoxal phosphate cofactor; CO(2) is released and the remaining methylamine moiety is then transferred to the lipoamide cofactor of the H protein. In Nocardia farcinica (strain IFM 10152), this protein is Glycine dehydrogenase (decarboxylating).